We begin with the raw amino-acid sequence, 431 residues long: Chaperone SurA (431 aa).

A signal peptide spans 1–22 (MNLKKLLTSAVLSISLCQSAFA). PpiC domains are found at residues 173-274 (AEEY…KVQD) and 283-383 (TTET…QLLD).

Its subcellular location is the periplasm. The catalysed reaction is [protein]-peptidylproline (omega=180) = [protein]-peptidylproline (omega=0). In terms of biological role, chaperone involved in the correct folding and assembly of outer membrane proteins. Recognizes specific patterns of aromatic residues and the orientation of their side chains, which are found more frequently in integral outer membrane proteins. May act in both early periplasmic and late outer membrane-associated steps of protein maturation. In Pseudoalteromonas translucida (strain TAC 125), this protein is Chaperone SurA.